A 218-amino-acid chain; its full sequence is Protein N-lysine methyltransferase METTL21A (218 aa).

S-adenosyl-L-methionine contacts are provided by residues Trp-47, 73–75 (GAG), Asp-94, Trp-125, and Ala-143.

The protein belongs to the methyltransferase superfamily. METTL21 family. Interacts with heat shock 70 family members; at least some of these proteins are methylation substrates.

Its subcellular location is the cytoplasm. The enzyme catalyses L-lysyl-[protein] + 3 S-adenosyl-L-methionine = N(6),N(6),N(6)-trimethyl-L-lysyl-[protein] + 3 S-adenosyl-L-homocysteine + 3 H(+). Protein-lysine methyltransferase that selectively trimethylates residues in heat shock protein 70 (HSP70) family members. Contributes to the in vivo trimethylation of Lys residues in HSPA1 and HSPA8. In vitro methylates 'Lys-561' in HSPA1, 'Lys-564' in HSPA2, 'Lys-585' in HSPA5, 'Lys-563' in HSPA6 and 'Lys-561' in HSPA8. This is Protein N-lysine methyltransferase METTL21A (METTL21A) from Bos taurus (Bovine).